The chain runs to 661 residues: mRNA 3'-end-processing protein RNA14 (661 aa).

The segment at 1 to 29 is disordered; it reads MSDGTATPDPLPSSSNTSTSLRPTSRVRD. The segment covering 12–24 has biased composition (low complexity); the sequence is PSSSNTSTSLRPT. HAT repeat units lie at residues 62 to 94, 99 to 133, 143 to 179, 190 to 223, 264 to 296, and 305 to 337; these read KQWK…LEFD, LDAA…YVRK, EARN…FLEH, QRVQ…WEQD, TLNQ…WESD, and LHKA…YQGE.

The protein localises to the nucleus. Its subcellular location is the cytoplasm. Its function is as follows. Component of the cleavage factor IA (CFIA) complex, which is involved in the endonucleolytic cleavage during polyadenylation-dependent pre-mRNA 3'-end formation. This is mRNA 3'-end-processing protein RNA14 (RNA14) from Kluyveromyces lactis (strain ATCC 8585 / CBS 2359 / DSM 70799 / NBRC 1267 / NRRL Y-1140 / WM37) (Yeast).